The following is a 195-amino-acid chain: MPEFLGPIAGFGVTLSTMFKKPETEFYPEEKRPTAPGYHGRHQLNRYADGLEKCIGCELCAWACPADAIYVEGADNTEEERFSPGERYGQVYQINYLRCIGCGLCVEACPTRALTMTNEYEMVDDNRAGLIYEKDRLLAPLKTDMTAPPHALRPGTTQDDYYRGDITAVPEQAAPEQAAPEQPAPEREPNPETEK.

2 4Fe-4S ferredoxin-type domains span residues 44–74 (LNRY…VEGA) and 90–119 (QVYQ…MTNE). [4Fe-4S] cluster contacts are provided by cysteine 54, cysteine 57, cysteine 60, cysteine 64, cysteine 99, cysteine 102, cysteine 105, and cysteine 109. The tract at residues 145–195 (MTAPPHALRPGTTQDDYYRGDITAVPEQAAPEQAAPEQPAPEREPNPETEK) is disordered. Residues 168–181 (AVPEQAAPEQAAPE) are compositionally biased toward low complexity. The segment covering 184–195 (APEREPNPETEK) has biased composition (basic and acidic residues).

The protein belongs to the complex I 23 kDa subunit family. NDH-1 is composed of 14 different subunits. Subunits NuoA, H, J, K, L, M, N constitute the membrane sector of the complex. It depends on [4Fe-4S] cluster as a cofactor.

Its subcellular location is the cell membrane. The enzyme catalyses a quinone + NADH + 5 H(+)(in) = a quinol + NAD(+) + 4 H(+)(out). Its function is as follows. NDH-1 shuttles electrons from NADH, via FMN and iron-sulfur (Fe-S) centers, to quinones in the respiratory chain. The immediate electron acceptor for the enzyme in this species is believed to be ubiquinone. Couples the redox reaction to proton translocation (for every two electrons transferred, four hydrogen ions are translocated across the cytoplasmic membrane), and thus conserves the redox energy in a proton gradient. The sequence is that of NADH-quinone oxidoreductase subunit I from Rhodococcus erythropolis (strain PR4 / NBRC 100887).